The following is a 200-amino-acid chain: Protein GrpE (200 aa).

The span at 1–25 (MMSKQNKKDWKKFKDEHKEEHKVEN) shows a compositional bias: basic and acidic residues. The segment at 1-52 (MMSKQNKKDWKKFKDEHKEEHKVENEILEEETDEESQHQEPALGHPSYTALE) is disordered.

It belongs to the GrpE family. In terms of assembly, homodimer.

The protein resides in the cytoplasm. In terms of biological role, participates actively in the response to hyperosmotic and heat shock by preventing the aggregation of stress-denatured proteins, in association with DnaK and GrpE. It is the nucleotide exchange factor for DnaK and may function as a thermosensor. Unfolded proteins bind initially to DnaJ; upon interaction with the DnaJ-bound protein, DnaK hydrolyzes its bound ATP, resulting in the formation of a stable complex. GrpE releases ADP from DnaK; ATP binding to DnaK triggers the release of the substrate protein, thus completing the reaction cycle. Several rounds of ATP-dependent interactions between DnaJ, DnaK and GrpE are required for fully efficient folding. The chain is Protein GrpE from Legionella pneumophila subsp. pneumophila (strain Philadelphia 1 / ATCC 33152 / DSM 7513).